We begin with the raw amino-acid sequence, 37 residues long: Rugosin-C (37 aa).

A disulfide bridge links cysteine 31 with cysteine 37.

The protein belongs to the frog skin active peptide (FSAP) family. Brevinin subfamily. In terms of tissue distribution, expressed by the skin glands.

It localises to the secreted. In terms of biological role, has antibacterial activity against Gram-positive bacteria. This is Rugosin-C from Glandirana rugosa (Japanese wrinkled frog).